Reading from the N-terminus, the 221-residue chain is 7-cyano-7-deazaguanine synthase (221 aa).

10 to 20 (LSGGLDSTTCM) is a binding site for ATP. Residues Cys-188, Cys-196, Cys-199, and Cys-202 each coordinate Zn(2+).

It belongs to the QueC family. As to quaternary structure, homodimer. Requires Zn(2+) as cofactor.

It carries out the reaction 7-carboxy-7-deazaguanine + NH4(+) + ATP = 7-cyano-7-deazaguanine + ADP + phosphate + H2O + H(+). It participates in purine metabolism; 7-cyano-7-deazaguanine biosynthesis. Functionally, catalyzes the ATP-dependent conversion of 7-carboxy-7-deazaguanine (CDG) to 7-cyano-7-deazaguanine (preQ(0)). The sequence is that of 7-cyano-7-deazaguanine synthase from Oceanobacillus iheyensis (strain DSM 14371 / CIP 107618 / JCM 11309 / KCTC 3954 / HTE831).